The following is a 362-amino-acid chain: EARP-interacting protein 1 (362 aa).

4 WD repeats span residues 61 to 108, 206 to 246, 250 to 290, and 319 to 359; these read HPAG…RTLE, AHIH…SALT, PHAH…SEQQ, and EHED…KYAL.

Belongs to the WD repeat EIPR1 family. Expressed in the hypodermis and the pharynx.

The protein resides in the cytoplasm. Functionally, plays a role in the trafficking of cargo to dense-core vesicles, probably through association with the endosome-associated recycling protein (EARP) complex. Important for neuronal function. This is EARP-interacting protein 1 from Caenorhabditis elegans.